The primary structure comprises 471 residues: GTPase Der (471 aa).

EngA-type G domains follow at residues 5–168 and 186–359; these read PVIA…TDLE and IRVA…DSAF. GTP is bound by residues 11–18, 58–62, 120–123, 192–199, 239–243, and 304–307; these read GRPNVGKS, DTGGI, NKTD, DTAGV, and NKWD. A KH-like domain is found at 360–444; it reads IKIGTNELTR…PIRLEFKSGT (85 aa).

This sequence belongs to the TRAFAC class TrmE-Era-EngA-EngB-Septin-like GTPase superfamily. EngA (Der) GTPase family. As to quaternary structure, associates with the 50S ribosomal subunit.

Functionally, GTPase that plays an essential role in the late steps of ribosome biogenesis. The chain is GTPase Der from Alcanivorax borkumensis (strain ATCC 700651 / DSM 11573 / NCIMB 13689 / SK2).